Reading from the N-terminus, the 261-residue chain is Carbonic anhydrase 1 (261 aa).

The segment at 1 to 31 is disordered; it reads MASPDWGYDDKNGPEQWSKLYPIANGNNQSP. Ala-2 carries the N-acetylalanine modification. The Alpha-carbonic anhydrase domain maps to 4–261; the sequence is PDWGYDDKNG…LKGRTVRASF (258 aa). Residue His-65 is the Proton donor/acceptor of the active site. Zn(2+)-binding residues include His-95, His-97, and His-120. Substrate contacts are provided by residues Thr-200 and 200 to 201; that span reads TH. Residues 240 to 261 form a disordered region; sequence VPMQHNNRPTQPLKGRTVRASF.

This sequence belongs to the alpha-carbonic anhydrase family. Requires Zn(2+) as cofactor.

Its subcellular location is the cytoplasm. It carries out the reaction hydrogencarbonate + H(+) = CO2 + H2O. It catalyses the reaction urea = cyanamide + H2O. Inhibited by acetazolamide. In terms of biological role, catalyzes the reversible hydration of carbon dioxide. Can hydrate cyanamide to urea. In Gorilla gorilla gorilla (Western lowland gorilla), this protein is Carbonic anhydrase 1 (CA1).